The following is a 435-amino-acid chain: rRNA methyltransferase 3A, mitochondrial (435 aa).

Residues 1–42 constitute a mitochondrion transit peptide; that stretch reads MAALMYNVSRGLVMLGERSLFQRERYQILVNSRRFLRGLRRR. Positions 314-324 are enriched in polar residues; that stretch reads KQLVSGQTENV. Residues 314–351 are disordered; sequence KQLVSGQTENVSSDDYSESDSDDDDDEEEDEDSLPHVK. The segment covering 328–345 has biased composition (acidic residues); sequence DYSESDSDDDDDEEEDED. Gly-369 and Leu-402 together coordinate S-adenosyl-L-methionine.

The protein belongs to the class IV-like SAM-binding methyltransferase superfamily. RNA methyltransferase TrmH family.

The protein localises to the mitochondrion. It carries out the reaction a uridine in rRNA + S-adenosyl-L-methionine = a 2'-O-methyluridine in rRNA + S-adenosyl-L-homocysteine + H(+). In terms of biological role, S-adenosyl-L-methionine-dependent 2'-O-ribose methyltransferase that catalyzes the formation of 2'-O-methylguanosine at position 1485 (Gm1485) in the mitochondrial large subunit ribosomal RNA (mtLSU rRNA), a conserved modification in the peptidyl transferase domain of the mtLSU rRNA. Also required for formation of 2'-O-methyluridine at position 1484 (Um1484) mediated by MRM2. This chain is rRNA methyltransferase 3A, mitochondrial (mrm3a), found in Danio rerio (Zebrafish).